Reading from the N-terminus, the 381-residue chain is Erythronate-4-phosphate dehydrogenase (381 aa).

Substrate-binding residues include serine 45 and threonine 66. NAD(+)-binding residues include aspartate 146 and threonine 173. Residue arginine 206 is part of the active site. An NAD(+)-binding site is contributed by aspartate 230. Glutamate 235 is an active-site residue. The Proton donor role is filled by histidine 252. Glycine 255 is a binding site for NAD(+). Tyrosine 256 provides a ligand contact to substrate.

This sequence belongs to the D-isomer specific 2-hydroxyacid dehydrogenase family. PdxB subfamily. Homodimer.

The protein resides in the cytoplasm. It carries out the reaction 4-phospho-D-erythronate + NAD(+) = (R)-3-hydroxy-2-oxo-4-phosphooxybutanoate + NADH + H(+). The protein operates within cofactor biosynthesis; pyridoxine 5'-phosphate biosynthesis; pyridoxine 5'-phosphate from D-erythrose 4-phosphate: step 2/5. Functionally, catalyzes the oxidation of erythronate-4-phosphate to 3-hydroxy-2-oxo-4-phosphonooxybutanoate. This chain is Erythronate-4-phosphate dehydrogenase, found in Hahella chejuensis (strain KCTC 2396).